The primary structure comprises 503 residues: Aromatase (503 aa).

The next 2 helical transmembrane spans lie at 19–39 (EVMPVATLPILLLTGFLFFVW) and 51–71 (GYCMGIGPLISHLRFLWMGLG). The tract at residues 294 to 324 (ENVNQCILEMMIAAPDTLSVTVFFMLCLIAQ) is substrate-binding pocket. Substrate-binding residues include Asp309 and Met374. Cys437 lines the heme pocket.

Belongs to the cytochrome P450 family. Heme serves as cofactor. In terms of tissue distribution, expressed in placenta. Highly expressed in follicles (0 hour:hCG), followed by a drop (12-24 hour:hCG) and by an increase (30-39 hour:hCG). Highly expressed in corpora lutea. Also expressed in granulosa cell layer. Not expressed in theca interna.

The protein resides in the endoplasmic reticulum membrane. The protein localises to the microsome membrane. The enzyme catalyses testosterone + 3 reduced [NADPH--hemoprotein reductase] + 3 O2 = 17beta-estradiol + formate + 3 oxidized [NADPH--hemoprotein reductase] + 4 H2O + 4 H(+). The catalysed reaction is androst-4-ene-3,17-dione + 3 reduced [NADPH--hemoprotein reductase] + 3 O2 = estrone + formate + 3 oxidized [NADPH--hemoprotein reductase] + 4 H2O + 4 H(+). It carries out the reaction androst-4-ene-3,17-dione + reduced [NADPH--hemoprotein reductase] + O2 = 19-hydroxyandrost-4-ene-3,17-dione + oxidized [NADPH--hemoprotein reductase] + H2O + H(+). It catalyses the reaction 19-hydroxyandrost-4-ene-3,17-dione + reduced [NADPH--hemoprotein reductase] + O2 = 19-oxo-androst-4-ene-3,17-dione + oxidized [NADPH--hemoprotein reductase] + 2 H2O + H(+). The enzyme catalyses 19-oxo-androst-4-ene-3,17-dione + reduced [NADPH--hemoprotein reductase] + O2 = estrone + formate + oxidized [NADPH--hemoprotein reductase] + H2O + 2 H(+). The catalysed reaction is estrone + reduced [NADPH--hemoprotein reductase] + O2 = 2-hydroxyestrone + oxidized [NADPH--hemoprotein reductase] + H2O + H(+). It carries out the reaction 17beta-hydroxy-5alpha-androstan-3-one + reduced [NADPH--hemoprotein reductase] + O2 = 17beta,19-dihydroxy-3-oxo-5alpha-androstanone + oxidized [NADPH--hemoprotein reductase] + H2O + H(+). It catalyses the reaction 17beta,19-dihydroxy-3-oxo-5alpha-androstanone + reduced [NADPH--hemoprotein reductase] + O2 = 17beta-hydroxy-3,19-dioxo-5alpha-androstanone + oxidized [NADPH--hemoprotein reductase] + 2 H2O + H(+). The enzyme catalyses 17beta-hydroxy-3,19-dioxo-5alpha-androstanone + reduced [NADPH--hemoprotein reductase] + O2 = 17beta-hydroxy-3-oxo-19-nor-5alpha-androst-1-ene + formate + oxidized [NADPH--hemoprotein reductase] + H2O + 2 H(+). It functions in the pathway steroid hormone biosynthesis. A cytochrome P450 monooxygenase that catalyzes the conversion of C19 androgens, androst-4-ene-3,17-dione (androstenedione) and testosterone to the C18 estrogens, estrone and estradiol, respectively. Catalyzes three successive oxidations of C19 androgens: two conventional oxidations at C19 yielding 19-hydroxy and 19-oxo/19-aldehyde derivatives, followed by a third oxidative aromatization step that involves C1-beta hydrogen abstraction combined with cleavage of the C10-C19 bond to yield a phenolic A ring and formic acid. Alternatively, the third oxidative reaction yields a 19-norsteroid and formic acid. Converts dihydrotestosterone to delta1,10-dehydro 19-nordihydrotestosterone and may play a role in homeostasis of this potent androgen. Also displays 2-hydroxylase activity toward estrone. Mechanistically, uses molecular oxygen inserting one oxygen atom into a substrate, and reducing the second into a water molecule, with two electrons provided by NADPH via cytochrome P450 reductase (CPR; NADPH-ferrihemoprotein reductase). The chain is Aromatase (CYP19A1) from Equus caballus (Horse).